The following is an 853-amino-acid chain: DNA mismatch repair protein MutS (853 aa).

ATP is bound at residue 614-621 (GPNMGGKS).

The protein belongs to the DNA mismatch repair MutS family.

Functionally, this protein is involved in the repair of mismatches in DNA. It is possible that it carries out the mismatch recognition step. This protein has a weak ATPase activity. This is DNA mismatch repair protein MutS from Enterobacter sp. (strain 638).